Reading from the N-terminus, the 264-residue chain is Cancer/testis antigen 55 (264 aa).

The interval 242–264 is disordered; the sequence is SSSGFQDDGGLGRPKRERRSQSI. Basic residues predominate over residues 254 to 264; it reads RPKRERRSQSI.

As to quaternary structure, interacts with GABARAP; this interaction may be important for GABARAP protein stability. Isoform 1 interacts with LAMP2; this interaction may be important for LAMP2 protein stability. In terms of tissue distribution, testis-specific. Expressed in spermatozoa (at protein level).

It is found in the cytoplasm. The protein localises to the cytoplasmic vesicle. The protein resides in the secretory vesicle. It localises to the acrosome. Its subcellular location is the cell projection. It is found in the cilium. The protein localises to the flagellum. Its function is as follows. Plays a role in spermatogenesis, possibly acting in the regulation of the autophagy pathway. This chain is Cancer/testis antigen 55 (CT55), found in Homo sapiens (Human).